The sequence spans 742 residues: Phosphatidylinositol 4-phosphate 5-kinase its3 (742 aa).

Disordered regions lie at residues 1–21 (MKIDSNGIVNPHSITNEIPSY) and 82–228 (LFKE…PDIG). Composition is skewed to low complexity over residues 90–105 (PSNPTAHSPSSSSNDS) and 129–142 (PSSNSSSSPQLQNL). Polar residues-rich tracts occupy residues 158 to 181 (RSSSNPVTSSQQPPNDRSTLSSSQ) and 193 to 218 (EKNSSNAEPSGSRSGDRGTNVSTSGS). Positions 264-662 (GHENYVTAYN…RFYKFVESSI (399 aa)) constitute a PIPK domain. Positions 677–742 (QDGQRVNKQQ…RNVTTNTSSS (66 aa)) are disordered. Positions 680–719 (QRVNKQQSVNAGNVRTNNKHGSLNNNTAPSSRNAKSTSAH) are enriched in polar residues.

Interacts with opy1 (via domain PH 1); the interaction is direct but opy1 does not appear to regulate its3 localization or function. In terms of processing, phosphorylated by casein kinase I. Phosphorylation inactivates the enzyme.

Its subcellular location is the cell membrane. The catalysed reaction is a 1,2-diacyl-sn-glycero-3-phospho-(1D-myo-inositol 4-phosphate) + ATP = a 1,2-diacyl-sn-glycero-3-phospho-(1D-myo-inositol-4,5-bisphosphate) + ADP + H(+). Its function is as follows. Catalyzes the phosphorylation of phosphatidylinositol 4-phosphate on the fifth hydroxyl of the myo-inositol ring, to form phosphatidylinositol 4,5-bisphosphate. Involved, together with the calcineurin ppb1, in cytokinesis. This Schizosaccharomyces pombe (strain 972 / ATCC 24843) (Fission yeast) protein is Phosphatidylinositol 4-phosphate 5-kinase its3 (its3).